A 491-amino-acid chain; its full sequence is Beta-galactosidase (491 aa).

The Proton donor role is filled by Glu-209. The active-site Nucleophile is Glu-389.

The protein belongs to the glycosyl hydrolase 1 family.

It catalyses the reaction Hydrolysis of terminal non-reducing beta-D-galactose residues in beta-D-galactosides.. This Sulfolobus acidocaldarius (strain ATCC 33909 / DSM 639 / JCM 8929 / NBRC 15157 / NCIMB 11770) protein is Beta-galactosidase (bgaS).